Consider the following 454-residue polypeptide: Maintenance of mitochondrial morphology protein 1 (454 aa).

The Lumenal portion of the chain corresponds to 1 to 128; sequence MSMVIGIGDL…QSSGWGFAHG (128 aa). Residues 129-149 form a helical membrane-spanning segment; sequence LLVGQLSVVAVLAFFIKFFIF. At 150-454 the chain is on the cytoplasmic side; sequence GNSSMARPLM…SESETAVDSN (305 aa). The SMP-LTD domain maps to 207–430; the sequence is QSESLDWFNV…EPRFQLIELP (224 aa).

The protein belongs to the MMM1 family. Homodimer. Component of the ER-mitochondria encounter structure (ERMES) or MDM complex, composed of MMM1, MDM10, MDM12 and MDM34. An MMM1 homodimer associates with one molecule of MDM12 on each side in a pairwise head-to-tail manner, and the SMP-LTD domains of MMM1 and MDM12 generate a continuous hydrophobic tunnel for phospholipid trafficking.

It is found in the endoplasmic reticulum membrane. In terms of biological role, component of the ERMES/MDM complex, which serves as a molecular tether to connect the endoplasmic reticulum (ER) and mitochondria. Components of this complex are involved in the control of mitochondrial shape and protein biogenesis, and function in nonvesicular lipid trafficking between the ER and mitochondria. The MDM12-MMM1 subcomplex functions in the major beta-barrel assembly pathway that is responsible for biogenesis of all outer membrane beta-barrel proteins, and acts in a late step after the SAM complex. The MDM10-MDM12-MMM1 subcomplex further acts in the TOM40-specific pathway after the action of the MDM12-MMM1 complex. Essential for establishing and maintaining the structure of mitochondria and maintenance of mtDNA nucleoids. This Komagataella phaffii (strain GS115 / ATCC 20864) (Yeast) protein is Maintenance of mitochondrial morphology protein 1.